The primary structure comprises 370 residues: Protein FAM110B (370 aa).

2 disordered regions span residues 127–151 and 237–256; these read SSEGSSSGSGHKHSSRNWPPHRSEA and KSPEADPVEPACGVSRRPSL. Residues serine 238 and serine 301 each carry the phosphoserine modification. The disordered stretch occupies residues 317 to 337; it reads DCEQSQDSNSDLRNDDSANDR. The span at 326–335 shows a compositional bias: basic and acidic residues; the sequence is SDLRNDDSAN.

The protein belongs to the FAM110 family. In terms of tissue distribution, detected in thyroid, spleen and testis, and at lower levels in stomach, spinal cord, lymph node, trachea, adrenal gland, prostate, ovary and intestine.

Its subcellular location is the cytoplasm. It is found in the cytoskeleton. The protein resides in the microtubule organizing center. The protein localises to the centrosome. Functionally, may be involved in tumor progression. This Homo sapiens (Human) protein is Protein FAM110B (FAM110B).